Consider the following 456-residue polypeptide: Bifunctional protein GlmU (456 aa).

Positions 1–229 (MLNNAMSVVI…LSEVEGVNNR (229 aa)) are pyrophosphorylase. Residues 11–14 (LAAG), Lys25, Gln76, 81–82 (GT), 103–105 (YGD), Gly140, Glu154, Asn169, and Asn227 each bind UDP-N-acetyl-alpha-D-glucosamine. Position 105 (Asp105) interacts with Mg(2+). Position 227 (Asn227) interacts with Mg(2+). The segment at 230-250 (LQLSRLERVYQSEQAEKLLLA) is linker. The tract at residues 251–456 (GVMLRDPARF…EGWRRPVKKK (206 aa)) is N-acetyltransferase. Residues Arg333 and Lys351 each coordinate UDP-N-acetyl-alpha-D-glucosamine. The active-site Proton acceptor is the His363. Tyr366 and Asn377 together coordinate UDP-N-acetyl-alpha-D-glucosamine. Acetyl-CoA contacts are provided by residues Ala380, 386–387 (NY), Ser405, Ala423, and Arg440.

It in the N-terminal section; belongs to the N-acetylglucosamine-1-phosphate uridyltransferase family. The protein in the C-terminal section; belongs to the transferase hexapeptide repeat family. Homotrimer. Mg(2+) is required as a cofactor.

It is found in the cytoplasm. It catalyses the reaction alpha-D-glucosamine 1-phosphate + acetyl-CoA = N-acetyl-alpha-D-glucosamine 1-phosphate + CoA + H(+). The catalysed reaction is N-acetyl-alpha-D-glucosamine 1-phosphate + UTP + H(+) = UDP-N-acetyl-alpha-D-glucosamine + diphosphate. Its pathway is nucleotide-sugar biosynthesis; UDP-N-acetyl-alpha-D-glucosamine biosynthesis; N-acetyl-alpha-D-glucosamine 1-phosphate from alpha-D-glucosamine 6-phosphate (route II): step 2/2. It participates in nucleotide-sugar biosynthesis; UDP-N-acetyl-alpha-D-glucosamine biosynthesis; UDP-N-acetyl-alpha-D-glucosamine from N-acetyl-alpha-D-glucosamine 1-phosphate: step 1/1. The protein operates within bacterial outer membrane biogenesis; LPS lipid A biosynthesis. In terms of biological role, catalyzes the last two sequential reactions in the de novo biosynthetic pathway for UDP-N-acetylglucosamine (UDP-GlcNAc). The C-terminal domain catalyzes the transfer of acetyl group from acetyl coenzyme A to glucosamine-1-phosphate (GlcN-1-P) to produce N-acetylglucosamine-1-phosphate (GlcNAc-1-P), which is converted into UDP-GlcNAc by the transfer of uridine 5-monophosphate (from uridine 5-triphosphate), a reaction catalyzed by the N-terminal domain. This is Bifunctional protein GlmU from Escherichia coli O8 (strain IAI1).